A 320-amino-acid chain; its full sequence is Mitochondrial glutamate carrier 2 (320 aa).

Solcar repeat units lie at residues 11 to 97 (LSIT…LRQL), 105 to 215 (RNLK…LNQL), and 224 to 313 (ASFT…GIGE). 3 helical membrane passes run 17 to 37 (LING…IDLA), 66 to 86 (FLGM…EKAI), and 111 to 131 (MLAG…MEML). Position 150 is a phosphoserine (Ser150). The next 3 membrane-spanning stretches (helical) occupy residues 190–210 (GLGA…PLFA), 230–250 (FVAG…LDVL), and 293–313 (ALVI…GIGE).

It belongs to the mitochondrial carrier (TC 2.A.29) family.

It localises to the mitochondrion inner membrane. The catalysed reaction is L-glutamate(in) + H(+)(in) = L-glutamate(out) + H(+)(out). Its function is as follows. Responsible for the transport of glutamate from the cytosol into the mitochondrial matrix with the concomitant import of a proton (symport system). This Rattus norvegicus (Rat) protein is Mitochondrial glutamate carrier 2 (Slc25a18).